Reading from the N-terminus, the 218-residue chain is Ribose-5-phosphate isomerase A (218 aa).

Substrate is bound by residues 27–30, 80–83, and 93–96; these read TGST, DGAD, and KGGG. The Proton acceptor role is filled by glutamate 102. Lysine 120 serves as a coordination point for substrate.

Belongs to the ribose 5-phosphate isomerase family. As to quaternary structure, homodimer.

It carries out the reaction aldehydo-D-ribose 5-phosphate = D-ribulose 5-phosphate. Its pathway is carbohydrate degradation; pentose phosphate pathway; D-ribose 5-phosphate from D-ribulose 5-phosphate (non-oxidative stage): step 1/1. Its function is as follows. Catalyzes the reversible conversion of ribose-5-phosphate to ribulose 5-phosphate. This Thiobacillus denitrificans (strain ATCC 25259 / T1) protein is Ribose-5-phosphate isomerase A.